The following is a 48-amino-acid chain: Sperm protamine P1 (48 aa).

The protein belongs to the protamine P1 family. As to expression, testis.

The protein resides in the nucleus. It localises to the chromosome. Its function is as follows. Protamines substitute for histones in the chromatin of sperm during the haploid phase of spermatogenesis. They compact sperm DNA into a highly condensed, stable and inactive complex. This is Sperm protamine P1 (PRM1) from Corynorhinus townsendii (Townsend's big-eared bat).